Here is a 380-residue protein sequence, read N- to C-terminus: Putative zinc finger protein C02F5.12 (380 aa).

Residues 137–187 are disordered; sequence NLDIPGTSSDIPSDPSSALKVPKKEVLDESEEILDQTSGSSSFSLNDSEQA. Composition is skewed to polar residues over residues 142-152 and 171-187; these read GTSSDIPSDPS and DQTSGSSSFSLNDSEQA. The C2H2-type zinc finger occupies 271 to 294; it reads IPCKLCGFECTNVRRMRSHYAKAH.

It localises to the nucleus. The chain is Putative zinc finger protein C02F5.12 from Caenorhabditis elegans.